We begin with the raw amino-acid sequence, 236 residues long: SPbeta prophage-derived uncharacterized protein YomV (236 aa).

This is SPbeta prophage-derived uncharacterized protein YomV (yomV) from Bacillus subtilis (strain 168).